A 465-amino-acid chain; its full sequence is tRNA modification GTPase MnmE (465 aa).

3 residues coordinate (6S)-5-formyl-5,6,7,8-tetrahydrofolate: Arg23, Glu81, and Lys120. In terms of domain architecture, TrmE-type G spans 217–389; that stretch reads GVHVVLAGRP…LIASLCDKVG (173 aa). Asn227 provides a ligand contact to K(+). GTP is bound by residues 227 to 232, 246 to 252, and 271 to 274; these read NAGKSS, TDVAGTT, and DTAG. Ser231 contacts Mg(2+). Positions 246, 248, and 251 each coordinate K(+). Thr252 is a binding site for Mg(2+). Residue Lys465 coordinates (6S)-5-formyl-5,6,7,8-tetrahydrofolate.

The protein belongs to the TRAFAC class TrmE-Era-EngA-EngB-Septin-like GTPase superfamily. TrmE GTPase family. As to quaternary structure, homodimer. Heterotetramer of two MnmE and two MnmG subunits. The cofactor is K(+).

The protein localises to the cytoplasm. Functionally, exhibits a very high intrinsic GTPase hydrolysis rate. Involved in the addition of a carboxymethylaminomethyl (cmnm) group at the wobble position (U34) of certain tRNAs, forming tRNA-cmnm(5)s(2)U34. The polypeptide is tRNA modification GTPase MnmE (Psychrobacter sp. (strain PRwf-1)).